The following is a 213-amino-acid chain: Holliday junction resolvase RecU (213 aa).

Mg(2+) contacts are provided by Thr99, Asp101, Glu114, and Gln133.

This sequence belongs to the RecU family. Mg(2+) serves as cofactor.

The protein localises to the cytoplasm. The enzyme catalyses Endonucleolytic cleavage at a junction such as a reciprocal single-stranded crossover between two homologous DNA duplexes (Holliday junction).. In terms of biological role, endonuclease that resolves Holliday junction intermediates in genetic recombination. Cleaves mobile four-strand junctions by introducing symmetrical nicks in paired strands. Promotes annealing of linear ssDNA with homologous dsDNA. Required for DNA repair, homologous recombination and chromosome segregation. The polypeptide is Holliday junction resolvase RecU (Lactococcus lactis subsp. cremoris (strain MG1363)).